Consider the following 230-residue polypeptide: Large ribosomal subunit protein uL1 (230 aa).

This sequence belongs to the universal ribosomal protein uL1 family. As to quaternary structure, part of the 50S ribosomal subunit.

In terms of biological role, binds directly to 23S rRNA. The L1 stalk is quite mobile in the ribosome, and is involved in E site tRNA release. Protein L1 is also a translational repressor protein, it controls the translation of the L11 operon by binding to its mRNA. This is Large ribosomal subunit protein uL1 from Leptospira biflexa serovar Patoc (strain Patoc 1 / Ames).